The sequence spans 99 residues: Protein SPIRAL1-like 5 (99 aa).

The segment covering 1 to 12 (MSRGGSFGGGQS) has biased composition (gly residues). The interval 1–99 (MSRGGSFGGG…SSLGYLFGDK (99 aa)) is disordered. A compositionally biased stretch (pro residues) spans 27–39 (TPAPPVAPKPAPP). A compositionally biased stretch (polar residues) spans 56–73 (KISNNNYQRVQGQNSGNF). Position 58 is a phosphoserine (Ser58).

Belongs to the SPIRAL1 family. As to expression, expressed exclusively in stems and flowers.

Acts redundantly with SPR1 in maintaining the cortical microtubules organization essential for anisotropic cell growth. The sequence is that of Protein SPIRAL1-like 5 (SP1L5) from Arabidopsis thaliana (Mouse-ear cress).